Consider the following 251-residue polypeptide: Phosphate import ATP-binding protein PstB 2 (251 aa).

The region spanning isoleucine 5 to leucine 246 is the ABC transporter domain. An ATP-binding site is contributed by glycine 37–serine 44.

The protein belongs to the ABC transporter superfamily. Phosphate importer (TC 3.A.1.7) family. In terms of assembly, the complex is composed of two ATP-binding proteins (PstB), two transmembrane proteins (PstC and PstA) and a solute-binding protein (PstS).

It is found in the cell membrane. The enzyme catalyses phosphate(out) + ATP + H2O = ADP + 2 phosphate(in) + H(+). Part of the ABC transporter complex PstSACB involved in phosphate import. Responsible for energy coupling to the transport system. The polypeptide is Phosphate import ATP-binding protein PstB 2 (Ligilactobacillus salivarius (strain UCC118) (Lactobacillus salivarius)).